A 354-amino-acid polypeptide reads, in one-letter code: Holliday junction branch migration complex subunit RuvB (354 aa).

A compositionally biased stretch (polar residues) spans 1-10; that stretch reads MAIKRNQGSN. The tract at residues 1–36 is disordered; sequence MAIKRNQGSNPKPEKKERLTKAETHQEQDNLEESIR. Over residues 12–36 the composition is skewed to basic and acidic residues; sequence KPEKKERLTKAETHQEQDNLEESIR. The large ATPase domain (RuvB-L) stretch occupies residues 13-196; sequence PEKKERLTKA…FGLIQRLKFY (184 aa). ATP contacts are provided by residues isoleucine 35, arginine 36, glycine 77, lysine 80, threonine 81, threonine 82, 143–145, arginine 186, tyrosine 196, and arginine 233; that span reads EDY. Threonine 81 contacts Mg(2+). The segment at 197–267 is small ATPAse domain (RuvB-S); it reads EPEELALIIK…LAAEALDIYQ (71 aa). The tract at residues 270-354 is head domain (RuvB-H); sequence PQGLDWTDRL…EEQLSIFSEQ (85 aa). The DNA site is built by arginine 325 and arginine 330.

It belongs to the RuvB family. As to quaternary structure, homohexamer. Forms an RuvA(8)-RuvB(12)-Holliday junction (HJ) complex. HJ DNA is sandwiched between 2 RuvA tetramers; dsDNA enters through RuvA and exits via RuvB. An RuvB hexamer assembles on each DNA strand where it exits the tetramer. Each RuvB hexamer is contacted by two RuvA subunits (via domain III) on 2 adjacent RuvB subunits; this complex drives branch migration. In the full resolvosome a probable DNA-RuvA(4)-RuvB(12)-RuvC(2) complex forms which resolves the HJ.

The protein resides in the cytoplasm. The catalysed reaction is ATP + H2O = ADP + phosphate + H(+). In terms of biological role, the RuvA-RuvB-RuvC complex processes Holliday junction (HJ) DNA during genetic recombination and DNA repair, while the RuvA-RuvB complex plays an important role in the rescue of blocked DNA replication forks via replication fork reversal (RFR). RuvA specifically binds to HJ cruciform DNA, conferring on it an open structure. The RuvB hexamer acts as an ATP-dependent pump, pulling dsDNA into and through the RuvAB complex. RuvB forms 2 homohexamers on either side of HJ DNA bound by 1 or 2 RuvA tetramers; 4 subunits per hexamer contact DNA at a time. Coordinated motions by a converter formed by DNA-disengaged RuvB subunits stimulates ATP hydrolysis and nucleotide exchange. Immobilization of the converter enables RuvB to convert the ATP-contained energy into a lever motion, pulling 2 nucleotides of DNA out of the RuvA tetramer per ATP hydrolyzed, thus driving DNA branch migration. The RuvB motors rotate together with the DNA substrate, which together with the progressing nucleotide cycle form the mechanistic basis for DNA recombination by continuous HJ branch migration. Branch migration allows RuvC to scan DNA until it finds its consensus sequence, where it cleaves and resolves cruciform DNA. The protein is Holliday junction branch migration complex subunit RuvB of Crocosphaera subtropica (strain ATCC 51142 / BH68) (Cyanothece sp. (strain ATCC 51142)).